The following is a 393-amino-acid chain: uncharacterized protein (393 aa).

[4Fe-4S] cluster is bound by residues C9, C15, C18, and C97. Q231, Y258, E279, and D325 together coordinate S-adenosyl-L-methionine. The active-site Nucleophile is the C352.

It belongs to the class I-like SAM-binding methyltransferase superfamily. RNA M5U methyltransferase family.

This is an uncharacterized protein from Leptospira interrogans serogroup Icterohaemorrhagiae serovar Lai (strain 56601).